A 69-amino-acid chain; its full sequence is Beta-defensin 43 (69 aa).

The N-terminal stretch at 1 to 22 (MRVLFSILGVLTLLSIVPLARS) is a signal peptide. Intrachain disulfides connect Cys29–Cys56 and Cys35–Cys49.

The protein belongs to the beta-defensin family.

The protein localises to the secreted. In terms of biological role, has bactericidal activity. This is Beta-defensin 43 (Defb43) from Mus musculus (Mouse).